The sequence spans 618 residues: Glucose starvation modulator protein 1 (618 aa).

The zn(2)-C6 fungal-type DNA-binding region spans 20–48; it reads CEFCHTKHIQCDVGRPCQNCLKRNIGKFC. Residues 325–352 are disordered; that stretch reads ANANTHPSHNAKLESECDSSSHSDADLE. Positions 335–352 are enriched in basic and acidic residues; that stretch reads AKLESECDSSSHSDADLE. Residues 466 to 538 enclose the PAS domain; it reads LLDLENMAKL…QIFNELLAFG (73 aa).

Belongs to the ERT1/acuK family.

It is found in the nucleus. In terms of biological role, transcription factor which regulates nonfermentable carbon utilization. Binds specifically to 5'-CGGN(8)CGG-3' and 5'-CGGN(9)CGG-3' sequences in the promoter region. The polypeptide is Glucose starvation modulator protein 1 (GSM1) (Saccharomyces cerevisiae (strain YJM789) (Baker's yeast)).